A 260-amino-acid polypeptide reads, in one-letter code: Large ribosomal subunit protein uL2 (260 aa).

The disordered stretch occupies residues 1 to 24 (MGRVIRAQRKGAGSVFKSHTHHRK).

This sequence belongs to the universal ribosomal protein uL2 family.

The protein resides in the cytoplasm. In Solanum lycopersicum (Tomato), this protein is Large ribosomal subunit protein uL2 (RPL8).